The chain runs to 114 residues: Large ribosomal subunit protein uL22 (114 aa).

It belongs to the universal ribosomal protein uL22 family. As to quaternary structure, part of the 50S ribosomal subunit.

This protein binds specifically to 23S rRNA; its binding is stimulated by other ribosomal proteins, e.g. L4, L17, and L20. It is important during the early stages of 50S assembly. It makes multiple contacts with different domains of the 23S rRNA in the assembled 50S subunit and ribosome. In terms of biological role, the globular domain of the protein is located near the polypeptide exit tunnel on the outside of the subunit, while an extended beta-hairpin is found that lines the wall of the exit tunnel in the center of the 70S ribosome. The sequence is that of Large ribosomal subunit protein uL22 from Alcanivorax borkumensis (strain ATCC 700651 / DSM 11573 / NCIMB 13689 / SK2).